The chain runs to 128 residues: Large ribosomal subunit protein bL20c (128 aa).

It belongs to the bacterial ribosomal protein bL20 family.

Its subcellular location is the plastid. It is found in the chloroplast. Binds directly to 23S ribosomal RNA and is necessary for the in vitro assembly process of the 50S ribosomal subunit. It is not involved in the protein synthesizing functions of that subunit. This is Large ribosomal subunit protein bL20c from Trachelium caeruleum (Blue throatwort).